The following is a 382-amino-acid chain: Anhydro-N-acetylmuramic acid kinase (382 aa).

22-29 contacts ATP; that stretch reads GTSMDGVD.

It belongs to the anhydro-N-acetylmuramic acid kinase family.

The enzyme catalyses 1,6-anhydro-N-acetyl-beta-muramate + ATP + H2O = N-acetyl-D-muramate 6-phosphate + ADP + H(+). It functions in the pathway amino-sugar metabolism; 1,6-anhydro-N-acetylmuramate degradation. Its pathway is cell wall biogenesis; peptidoglycan recycling. Catalyzes the specific phosphorylation of 1,6-anhydro-N-acetylmuramic acid (anhMurNAc) with the simultaneous cleavage of the 1,6-anhydro ring, generating MurNAc-6-P. Is required for the utilization of anhMurNAc either imported from the medium or derived from its own cell wall murein, and thus plays a role in cell wall recycling. The chain is Anhydro-N-acetylmuramic acid kinase from Burkholderia lata (strain ATCC 17760 / DSM 23089 / LMG 22485 / NCIMB 9086 / R18194 / 383).